Reading from the N-terminus, the 225-residue chain is Uracil phosphoribosyltransferase (225 aa).

36–40 (KGLVR) lines the GTP pocket. 5-phospho-alpha-D-ribose 1-diphosphate contacts are provided by residues arginine 86, arginine 111, and 145–153 (DPMLATGST). Residues isoleucine 210 and 215-217 (GDA) each bind uracil. 5-phospho-alpha-D-ribose 1-diphosphate is bound at residue aspartate 216.

It belongs to the UPRTase family. Mg(2+) serves as cofactor.

The catalysed reaction is UMP + diphosphate = 5-phospho-alpha-D-ribose 1-diphosphate + uracil. Its pathway is pyrimidine metabolism; UMP biosynthesis via salvage pathway; UMP from uracil: step 1/1. With respect to regulation, allosterically activated by GTP. In terms of biological role, catalyzes the conversion of uracil and 5-phospho-alpha-D-ribose 1-diphosphate (PRPP) to UMP and diphosphate. In Haloarcula marismortui (strain ATCC 43049 / DSM 3752 / JCM 8966 / VKM B-1809) (Halobacterium marismortui), this protein is Uracil phosphoribosyltransferase.